The sequence spans 294 residues: Acetyl-coenzyme A carboxylase carboxyl transferase subunit beta (294 aa).

The region spanning isoleucine 30 to glutamate 294 is the CoA carboxyltransferase N-terminal domain. Residues cysteine 34, cysteine 37, cysteine 53, and cysteine 56 each contribute to the Zn(2+) site. The C4-type zinc finger occupies cysteine 34–cysteine 56.

Belongs to the AccD/PCCB family. As to quaternary structure, acetyl-CoA carboxylase is a heterohexamer composed of biotin carboxyl carrier protein (AccB), biotin carboxylase (AccC) and two subunits each of ACCase subunit alpha (AccA) and ACCase subunit beta (AccD). Zn(2+) is required as a cofactor.

The protein resides in the cytoplasm. The enzyme catalyses N(6)-carboxybiotinyl-L-lysyl-[protein] + acetyl-CoA = N(6)-biotinyl-L-lysyl-[protein] + malonyl-CoA. It functions in the pathway lipid metabolism; malonyl-CoA biosynthesis; malonyl-CoA from acetyl-CoA: step 1/1. Its function is as follows. Component of the acetyl coenzyme A carboxylase (ACC) complex. Biotin carboxylase (BC) catalyzes the carboxylation of biotin on its carrier protein (BCCP) and then the CO(2) group is transferred by the transcarboxylase to acetyl-CoA to form malonyl-CoA. The sequence is that of Acetyl-coenzyme A carboxylase carboxyl transferase subunit beta from Listeria monocytogenes serotype 4a (strain HCC23).